The following is a 132-amino-acid chain: Chaperone protein SycT (132 aa).

As to quaternary structure, binds to YopT.

Functionally, functions as a specific chaperone for YopT. This chain is Chaperone protein SycT (sycT), found in Yersinia pestis.